The chain runs to 504 residues: 2,3-bisphosphoglycerate-independent phosphoglycerate mutase (504 aa).

Mn(2+) is bound by residues Asp11 and Ser61. The Phosphoserine intermediate role is filled by Ser61. Residues His122, Arg152–Asp153, Arg183, Arg189, Arg255–Arg258, and Lys329 each bind substrate. The Mn(2+) site is built by Asp396, His400, Asp437, His438, and His455.

It belongs to the BPG-independent phosphoglycerate mutase family. Monomer. Mn(2+) is required as a cofactor.

It catalyses the reaction (2R)-2-phosphoglycerate = (2R)-3-phosphoglycerate. The protein operates within carbohydrate degradation; glycolysis; pyruvate from D-glyceraldehyde 3-phosphate: step 3/5. Functionally, catalyzes the interconversion of 2-phosphoglycerate and 3-phosphoglycerate. This chain is 2,3-bisphosphoglycerate-independent phosphoglycerate mutase, found in Bacteroides thetaiotaomicron (strain ATCC 29148 / DSM 2079 / JCM 5827 / CCUG 10774 / NCTC 10582 / VPI-5482 / E50).